Here is a 447-residue protein sequence, read N- to C-terminus: tRNA-2-methylthio-N(6)-dimethylallyladenosine synthase (447 aa).

Residues 1–116 form the MTTase N-terminal domain; that stretch reads MYIRTFGCQM…LPDLIKRRRA (116 aa). Residues Cys8, Cys45, Cys79, Cys153, Cys157, and Cys160 each contribute to the [4Fe-4S] cluster site. The 234-residue stretch at 139 to 372 folds into the Radical SAM core domain; it reads RVDGATAFVS…QALINQQAAA (234 aa). In terms of domain architecture, TRAM spans 375–438; the sequence is QGMIGTRQRV…TNSLRGRVAG (64 aa).

This sequence belongs to the methylthiotransferase family. MiaB subfamily. As to quaternary structure, monomer. Requires [4Fe-4S] cluster as cofactor.

The protein resides in the cytoplasm. It carries out the reaction N(6)-dimethylallyladenosine(37) in tRNA + (sulfur carrier)-SH + AH2 + 2 S-adenosyl-L-methionine = 2-methylsulfanyl-N(6)-dimethylallyladenosine(37) in tRNA + (sulfur carrier)-H + 5'-deoxyadenosine + L-methionine + A + S-adenosyl-L-homocysteine + 2 H(+). Functionally, catalyzes the methylthiolation of N6-(dimethylallyl)adenosine (i(6)A), leading to the formation of 2-methylthio-N6-(dimethylallyl)adenosine (ms(2)i(6)A) at position 37 in tRNAs that read codons beginning with uridine. This is tRNA-2-methylthio-N(6)-dimethylallyladenosine synthase from Bordetella pertussis (strain Tohama I / ATCC BAA-589 / NCTC 13251).